The primary structure comprises 228 residues: L-ribulose-5-phosphate 4-epimerase UlaF (228 aa).

Substrate-binding positions include 26–27 (GN), 43–44 (SG), and 72–73 (SS). Positions 74, 93, and 95 each coordinate Zn(2+). Residue Asp-118 is the Proton donor/acceptor of the active site. Residue His-167 participates in Zn(2+) binding. Catalysis depends on Tyr-225, which acts as the Proton donor/acceptor.

The protein belongs to the aldolase class II family. AraD/FucA subfamily. Zn(2+) is required as a cofactor.

It catalyses the reaction L-ribulose 5-phosphate = D-xylulose 5-phosphate. It functions in the pathway cofactor degradation; L-ascorbate degradation; D-xylulose 5-phosphate from L-ascorbate: step 4/4. Catalyzes the isomerization of L-ribulose 5-phosphate to D-xylulose 5-phosphate. Is involved in the anaerobic L-ascorbate utilization. This Escherichia coli (strain K12 / MC4100 / BW2952) protein is L-ribulose-5-phosphate 4-epimerase UlaF.